Here is a 245-residue protein sequence, read N- to C-terminus: Orotidine 5'-phosphate decarboxylase (245 aa).

Substrate-binding positions include D22, K44, 71–80 (DLKFHDIPNT), T131, R192, Q201, G221, and R222. K73 (proton donor) is an active-site residue.

This sequence belongs to the OMP decarboxylase family. Type 1 subfamily. As to quaternary structure, homodimer.

The catalysed reaction is orotidine 5'-phosphate + H(+) = UMP + CO2. It functions in the pathway pyrimidine metabolism; UMP biosynthesis via de novo pathway; UMP from orotate: step 2/2. Functionally, catalyzes the decarboxylation of orotidine 5'-monophosphate (OMP) to uridine 5'-monophosphate (UMP). This chain is Orotidine 5'-phosphate decarboxylase, found in Escherichia coli O157:H7.